The primary structure comprises 248 residues: Ribonuclease HII (248 aa).

Residues 29-219 (DIVCGVDEAG…VREAHLRLGT (191 aa)) enclose the RNase H type-2 domain. A divalent metal cation is bound by residues Asp-35, Glu-36, and Asp-128.

Belongs to the RNase HII family. Mn(2+) is required as a cofactor. It depends on Mg(2+) as a cofactor.

The protein localises to the cytoplasm. It catalyses the reaction Endonucleolytic cleavage to 5'-phosphomonoester.. In terms of biological role, endonuclease that specifically degrades the RNA of RNA-DNA hybrids. In Paraburkholderia xenovorans (strain LB400), this protein is Ribonuclease HII.